A 612-amino-acid polypeptide reads, in one-letter code: Zinc metalloproteinase nas-36 (612 aa).

The N-terminal stretch at 1–16 (MLLLVLLFVFISATNA) is a signal peptide. A glycan (N-linked (GlcNAc...) asparagine) is linked at Asn-15. Positions 17-122 (SDVGRRELEK…KSKPNVRGRR (106 aa)) are excised as a propeptide. A Peptidase M12A domain is found at 123–320 (SFDASPESKW…IETINKAYCS (198 aa)). Residue Asn-163 is glycosylated (N-linked (GlcNAc...) asparagine). Disulfide bonds link Cys-166–Cys-319, Cys-190–Cys-209, Cys-329–Cys-343, Cys-345–Cys-354, Cys-365–Cys-394, Cys-515–Cys-546, Cys-519–Cys-551, and Cys-531–Cys-536. A Zn(2+)-binding site is contributed by His-217. Residue Glu-218 is part of the active site. The Zn(2+) site is built by His-221 and His-227. Residues 320-355 (SDRCSGSNDCKNGGYPHPKQCDTCLCPNGLSGPKCE) form the EGF-like domain. A CUB domain is found at 365-478 (CGGKIVVKEE…VGFKLQARAT (114 aa)). In terms of domain architecture, TSP type-1 spans 503 to 552 (TDQWAEWGSWSQCSRSCGGCGIMSRVRVCRTKQCKGRRQEFSTCNLKACP).

Zn(2+) is required as a cofactor.

It localises to the secreted. Inhibited by 1,10-phenanthroline. Its function is as follows. Metalloprotease. Involved in molting, a process during larval stages in which a new cuticle is formed and the old cuticle is shed. The polypeptide is Zinc metalloproteinase nas-36 (Haemonchus contortus (Barber pole worm)).